Here is a 341-residue protein sequence, read N- to C-terminus: 2-dehydro-3-deoxy-L-galactonate 5-dehydrogenase (341 aa).

Cys-37 is a Zn(2+) binding site. Catalysis depends on charge relay system residues Thr-39 and His-42. Zn(2+) is bound by residues His-60, Glu-61, Cys-90, Cys-93, Cys-96, and Cys-104.

This sequence belongs to the zinc-containing alcohol dehydrogenase family. Zn(2+) is required as a cofactor.

The enzyme catalyses 2-dehydro-3-deoxy-L-galactonate + NAD(+) = 3-deoxy-D-glycero-2,5-hexodiulosonate + NADH + H(+). In terms of biological role, involved in the degradation of 3,6-anhydro-L-galactose, which is the major monomeric sugar of red macroalgae. Catalyzes the third step of the pathway, the NAD(+)-dependent oxidation of 2-dehydro-3-deoxy-L-galactonate (L-KDGal) to 3-deoxy-D-glycero-2,5-hexodiulosonate (L-DDGal). This is 2-dehydro-3-deoxy-L-galactonate 5-dehydrogenase from Pseudoalteromonas atlantica (strain T6c / ATCC BAA-1087).